The following is a 155-amino-acid chain: UPF0303 protein lp_3613 (155 aa).

This sequence belongs to the UPF0303 family.

The protein is UPF0303 protein lp_3613 of Lactiplantibacillus plantarum (strain ATCC BAA-793 / NCIMB 8826 / WCFS1) (Lactobacillus plantarum).